Reading from the N-terminus, the 71-residue chain is Small ribosomal subunit protein bS21 (71 aa).

The protein belongs to the bacterial ribosomal protein bS21 family.

The polypeptide is Small ribosomal subunit protein bS21 (Dichelobacter nodosus (strain VCS1703A)).